A 100-amino-acid polypeptide reads, in one-letter code: Competence protein ComGE (100 aa).

The helical transmembrane segment at 15–35 (VILLEAVVALAIFASIATLLL) threads the bilayer.

The transformation pili are flexible filaments, consisting mainly of the major pilin ComGC and smaller amounts of the minor pilins, including at least ComGD, ComGF and ComGG, and perhaps ComGE. Interacts with ComGD. Interacts with ComGF. Interacts with ComGG.

It localises to the cell membrane. Its subcellular location is the cell surface. Its function is as follows. Required for formation of the type IV-like pilus (T4P) that plays a role in transformation. Transformation pili are dynamically extended and retracted, perhaps thereby promoting DNA uptake and transformation. Involved in transformation. Required for DNA binding. In Streptococcus pneumoniae (strain ATCC BAA-255 / R6), this protein is Competence protein ComGE.